The following is a 424-amino-acid chain: Serine--tRNA ligase (424 aa).

231 to 233 is a binding site for L-serine; sequence TAE. 262-264 is an ATP binding site; it reads RSE. Glu285 contributes to the L-serine binding site. 349-352 is an ATP binding site; sequence EISS. Residue Ser385 coordinates L-serine.

Belongs to the class-II aminoacyl-tRNA synthetase family. Type-1 seryl-tRNA synthetase subfamily. In terms of assembly, homodimer. The tRNA molecule binds across the dimer.

Its subcellular location is the cytoplasm. The enzyme catalyses tRNA(Ser) + L-serine + ATP = L-seryl-tRNA(Ser) + AMP + diphosphate + H(+). The catalysed reaction is tRNA(Sec) + L-serine + ATP = L-seryl-tRNA(Sec) + AMP + diphosphate + H(+). The protein operates within aminoacyl-tRNA biosynthesis; selenocysteinyl-tRNA(Sec) biosynthesis; L-seryl-tRNA(Sec) from L-serine and tRNA(Sec): step 1/1. Catalyzes the attachment of serine to tRNA(Ser). Is also able to aminoacylate tRNA(Sec) with serine, to form the misacylated tRNA L-seryl-tRNA(Sec), which will be further converted into selenocysteinyl-tRNA(Sec). The protein is Serine--tRNA ligase of Bacillus cereus (strain ZK / E33L).